The primary structure comprises 1017 residues: Adhesion G-protein coupled receptor G2 (1017 aa).

The signal sequence occupies residues methionine 1–serine 37. Residues leucine 38–alanine 627 lie on the Extracellular side of the membrane. 9 N-linked (GlcNAc...) asparagine glycosylation sites follow: asparagine 44, asparagine 85, asparagine 99, asparagine 111, asparagine 117, asparagine 144, asparagine 162, asparagine 186, and asparagine 194. The segment at proline 301 to threonine 366 is disordered. The segment covering alanine 308–proline 320 has biased composition (low complexity). Composition is skewed to polar residues over residues glutamine 321–serine 335 and serine 344–threonine 366. N-linked (GlcNAc...) asparagine glycosylation is found at asparagine 357, asparagine 370, asparagine 435, asparagine 438, asparagine 456, asparagine 461, asparagine 528, asparagine 542, asparagine 547, asparagine 551, and asparagine 597. One can recognise a GAIN-B domain in the interval threonine 462–serine 619. 2 cysteine pairs are disulfide-bonded: cysteine 570-cysteine 601 and cysteine 589-cysteine 603. Positions cysteine 570 to serine 619 are GPS. A stachel region spans residues serine 608–serine 619. A helical membrane pass occupies residues leucine 628–valine 648. Residues threonine 649–glutamine 667 are Cytoplasmic-facing. Residues leucine 668–tyrosine 688 form a helical membrane-spanning segment. At lysine 689–leucine 693 the chain is on the extracellular side. The chain crosses the membrane as a helical span at residues cysteine 694–leucine 714. Cysteine 694 and cysteine 778 are joined by a disulfide. Residues glutamate 715–lysine 737 lie on the Cytoplasmic side of the membrane. The helical transmembrane segment at phenylalanine 738–proline 758 threads the bilayer. The Extracellular portion of the chain corresponds to aspartate 759–threonine 789. Residues valine 790 to valine 810 form a helical membrane-spanning segment. The Cytoplasmic segment spans residues glutamine 811–serine 834. Residues isoleucine 835–proline 855 traverse the membrane as a helical segment. Residues valine 856 to asparagine 857 lie on the Extracellular side of the membrane. Asparagine 857 is a glycosylation site (N-linked (GlcNAc...) asparagine). Residues valine 858–phenylalanine 878 traverse the membrane as a helical segment. 3beta-hydroxyandrost-5-en-17-one is bound at residue asparagine 868. The Cytoplasmic portion of the chain corresponds to tyrosine 879–methionine 1017. Residues glutamine 918–asparagine 939 are disordered. A Phosphoserine modification is found at serine 1010.

It belongs to the G-protein coupled receptor 2 family. Adhesion G-protein coupled receptor (ADGR) subfamily. Heterodimer of 2 chains generated by proteolytic processing; the large extracellular N-terminal fragment and the membrane-bound C-terminal fragment predominantly remain associated and non-covalently linked. Interacts with CFTR. Post-translationally, proteolytically cleaved into 2 subunits, an extracellular subunit and a seven-transmembrane subunit. Highly glycosylated. Epididymis-specific expression (at protein level). Both subunits are associated with apical membranes of efferent ductule and proximal epididymal duct epithelia. Mainly expressed in the nonciliated principal cells of the proximal excurrent ducts. Specifically over-expressed in Ewing sarcomas but also up-regulated in a number of carcinomas derived from prostate, kidney or lung.

The protein localises to the apical cell membrane. With respect to regulation, forms a heterodimer of 2 chains generated by proteolytic processing that remain associated through non-covalent interactions mediated by the GAIN-B domain. In the inactivated receptor, the Stachel sequence (also named stalk) is embedded in the GAIN-B domain, where it adopts a beta-strand conformation. On activation, the Stachel moves into the 7 transmembrane region and adopts a twisted hook-shaped configuration that forms contacts within the receptor, leading to coupling of a G-alpha protein, which activates signaling. The cleaved GAIN-B and N-terminal domains can then dissociate from the rest of the receptor. Deoxycorticosterone (DOC) acts as an antagonist of ADGRG2. In terms of biological role, adhesion G-protein coupled receptor (aGPCR) for steroid hormones, such as dehydroepiandrosterone (DHEA; also named 3beta-hydroxyandrost-5-en-17-one) and androstenedione. Involved in a signal transduction pathway controlling epididymal function and male fertility. Ligand binding causes a conformation change that triggers signaling via guanine nucleotide-binding proteins (G proteins) and modulates the activity of downstream effectors, such as adenylate cyclase. ADGRG2 is coupled to G(s) G proteins and mediates activation of adenylate cyclase activity. Also able to couple with G(q) G proteins in vitro. Together with CFTR, required to promote fluid reabsorption within efferent ductule. This is Adhesion G-protein coupled receptor G2 from Homo sapiens (Human).